We begin with the raw amino-acid sequence, 81 residues long: Cytoplasmic envelopment protein 3 (81 aa).

Glycine 2 carries the N-myristoyl glycine; by host lipid modification. Residues 22–23 (LV) carry the Di-leucine-like internalization motif motif. An asp/Glu-rich (acidic) region spans residues 41-47 (DFDENVT). The disordered stretch occupies residues 47 to 81 (TEDADKSTQRRPRVIDVTPKRKPSGKSSHSKCAKC). Over residues 66 to 81 (KRKPSGKSSHSKCAKC) the composition is skewed to basic residues.

The protein belongs to the herpesviridae cytoplasmic envelopment protein 3 family. As to quaternary structure, interacts with cytoplasmic envelopment protein 2; this interaction is essential for the proper localization of each protein to the assembly complex and thus for the production of infectious virus. In terms of processing, myristoylation and palmitoylation (probably on one or more of the nearby cysteines at the N-terminus) enable membrane-binding and Golgi apparatus-specific targeting and are essential for efficient packaging. Phosphorylated. Phosphorylation does not seem to be required for recycling to the host Golgi apparatus. Packaging is selective for underphosphorylated forms.

It localises to the virion tegument. Its subcellular location is the virion membrane. It is found in the host cell membrane. The protein resides in the host Golgi apparatus membrane. Functionally, plays an important role in the cytoplasmic envelopment of tegument proteins and capsids during the assembly and egress processes. Also participates in viral entry at the fusion step probably by regulating the core fusion machinery. This is Cytoplasmic envelopment protein 3 from Homo sapiens (Human).